The primary structure comprises 466 residues: Ceramide glucosyltransferase 1 (466 aa).

The chain crosses the membrane as a helical span at residues 70-90; the sequence is LALSGCIFVSVLYLVHIIAFF. Aspartate 148 is a short sequence motif (D1). Aspartate 200 is a short sequence motif (D2). A short sequence motif (D3) is located at residue aspartate 294. Aspartate 294 functions as the Proton acceptor in the catalytic mechanism. Residues 330 to 334 carry the (Q/R)XXRW motif; the sequence is RIGRW. 2 helical membrane-spanning segments follow: residues 354 to 374 and 403 to 423; these read CVTS…YSVY and TPFL…FIFI.

Belongs to the glycosyltransferase 2 family. Expressed in excretory canals, pharyngeal intestinal valve, intestine and intestinal rectal valve.

It is found in the membrane. The catalysed reaction is an N-acylsphing-4-enine + UDP-alpha-D-glucose = a beta-D-glucosyl-(1&lt;-&gt;1')-N-acylsphing-4-enine + UDP + H(+). The enzyme catalyses an N-acyl-15-methylhexadecasphing-4-enine + UDP-alpha-D-glucose = an N-acyl-1-beta-D-glucosyl-15-methylhexadecasphing-4-enine + UDP + H(+). Its pathway is lipid metabolism; sphingolipid metabolism. Catalyzes the first glycosylation step in glycosphingolipid biosynthesis, the transfer of glucose to ceramide to produce glucosylceramides (GlcCer). GlcCer are known to contribute to the physical properties and physiological functions of membranes and may regulate signal transduction. Only branched-chain sphingoid bases like 15-methylhexadecasphing-4-enine are used for generating complex sphingolipids in Caenorhabditis elegans. Together with cgt-3, plays a role in the trafficking of proteins such as mig-14 to the cell membrane in intestinal cells. The sequence is that of Ceramide glucosyltransferase 1 from Caenorhabditis elegans.